The primary structure comprises 533 residues: Early growth response protein 1 (533 aa).

2 disordered regions span residues 1–94 (MAAA…EQPY) and 161–237 (MTNP…PPPA). A compositionally biased stretch (gly residues) spans 68 to 77 (SGGGGGGGSN). A compositionally biased stretch (low complexity) spans 164 to 189 (PPTSSSSAPSPAASSSSSASQSPPLS). Residue Lys-303 forms a Glycyl lysine isopeptide (Lys-Gly) (interchain with G-Cter in SUMO2) linkage. Residues 316–336 (PSRMRKYPNRPSKTPPHERPY) form a disordered region. 3 consecutive C2H2-type zinc fingers follow at residues 336–360 (YACPVESCDRRFSRSDELTRHIRIH), 366–388 (FQCRICMRNFSRSDHLTTHIRTH), and 394–416 (FACDICGRKFARSDERKRHTKIH). The disordered stretch occupies residues 407-478 (DERKRHTKIH…SSTYPSPAHS (72 aa)). Positions 411 to 421 (RHTKIHLRQKD) are enriched in basic residues. Over residues 427–475 (SVVASPAASSLSSYPSPVATSYPSPATTSFPSPVPTSYSSPGSSTYPSP) the composition is skewed to low complexity.

This sequence belongs to the EGR C2H2-type zinc-finger protein family. As to quaternary structure, interacts with SNAI1 and SP1 upon 12-O-tetradecanoylphorbol-13-acetate (TPA) induction. As to expression, detected in lung vasculature and in mononuclear phagocytes. Detected in liver (at protein level). Expressed in the liver in a circadian manner.

The protein resides in the nucleus. It is found in the cytoplasm. Transcriptional regulator. Recognizes and binds to the DNA sequence 5'-GCG(T/G)GGGCG-3'(EGR-site) in the promoter region of target genes. Binds double-stranded target DNA, irrespective of the cytosine methylation status. Regulates the transcription of numerous target genes, and thereby plays an important role in regulating the response to growth factors, DNA damage, and ischemia. Plays a role in the regulation of cell survival, proliferation and cell death. Activates expression of p53/TP53 and TGFB1, and thereby helps prevent tumor formation. Required for normal progress through mitosis and normal proliferation of hepatocytes after partial hepatectomy. Mediates responses to ischemia and hypoxia; regulates the expression of proteins such as IL1B and CXCL2 that are involved in inflammatory processes and development of tissue damage after ischemia. Regulates biosynthesis of luteinizing hormone (LHB) in the pituitary. Regulates the amplitude of the expression rhythms of clock genes: BMAL1, PER2 and NR1D1 in the liver via the activation of PER1 (clock repressor) transcription. Regulates the rhythmic expression of core-clock gene BMAL1 in the suprachiasmatic nucleus (SCN). This Mus musculus (Mouse) protein is Early growth response protein 1 (Egr1).